The primary structure comprises 248 residues: Adenosylcobinamide-GDP ribazoletransferase (248 aa).

Transmembrane regions (helical) follow at residues 34 to 54 (LVFAPVVGLLIGGILTILFYI), 58 to 78 (FFPPGVTGILLIAAYIMLTGG), 113 to 133 (AVLAVICVVILNYALLSSIPL), 139 to 159 (ALLLFPVAGRIGSLVGAGSTV), 185 to 205 (IIYFIVSLLVLNIKGLLLAAA), and 227 to 247 (DILGAVCELNQTFFLILFYLF).

The protein belongs to the CobS family. The cofactor is Mg(2+).

It localises to the cell membrane. The catalysed reaction is alpha-ribazole + adenosylcob(III)inamide-GDP = adenosylcob(III)alamin + GMP + H(+). It catalyses the reaction alpha-ribazole 5'-phosphate + adenosylcob(III)inamide-GDP = adenosylcob(III)alamin 5'-phosphate + GMP + H(+). Its pathway is cofactor biosynthesis; adenosylcobalamin biosynthesis; adenosylcobalamin from cob(II)yrinate a,c-diamide: step 7/7. Functionally, joins adenosylcobinamide-GDP and alpha-ribazole to generate adenosylcobalamin (Ado-cobalamin). Also synthesizes adenosylcobalamin 5'-phosphate from adenosylcobinamide-GDP and alpha-ribazole 5'-phosphate. The polypeptide is Adenosylcobinamide-GDP ribazoletransferase (Acetivibrio thermocellus (strain ATCC 27405 / DSM 1237 / JCM 9322 / NBRC 103400 / NCIMB 10682 / NRRL B-4536 / VPI 7372) (Clostridium thermocellum)).